Here is a 117-residue protein sequence, read N- to C-terminus: Large ribosomal subunit protein bL20 (117 aa).

The protein belongs to the bacterial ribosomal protein bL20 family.

Its function is as follows. Binds directly to 23S ribosomal RNA and is necessary for the in vitro assembly process of the 50S ribosomal subunit. It is not involved in the protein synthesizing functions of that subunit. The chain is Large ribosomal subunit protein bL20 from Symbiobacterium thermophilum (strain DSM 24528 / JCM 14929 / IAM 14863 / T).